The chain runs to 494 residues: Calmodulin-binding protein 60 A (494 aa).

A calmodulin-binding region spans residues 1 to 62 (MRIPTYDFGS…AGIKWICEKE (62 aa)). Positions 132-252 (VSDWTDEDIR…AFHRRLNLSN (121 aa)) are DNA-binding.

The protein belongs to the plant ACBP60 protein family. As to quaternary structure, interacts with calmodulin (CaM). In terms of tissue distribution, expressed in stems, flowers and root.

The protein resides in the nucleus. Transcription activator that binds DNA in a sequence-specific manner, likely 5'-GAAATTTTGG-3', to promote the expression of target genes. The chain is Calmodulin-binding protein 60 A from Arabidopsis thaliana (Mouse-ear cress).